We begin with the raw amino-acid sequence, 210 residues long: Large ribosomal subunit protein uL4 (210 aa).

The span at 41-51 shows a compositional bias: polar residues; sequence ANARQGTQSTK. Disordered stretches follow at residues 41-60 and 67-98; these read ANAR…QGSS and KGTG…DFSK.

The protein belongs to the universal ribosomal protein uL4 family. As to quaternary structure, part of the 50S ribosomal subunit.

Its function is as follows. One of the primary rRNA binding proteins, this protein initially binds near the 5'-end of the 23S rRNA. It is important during the early stages of 50S assembly. It makes multiple contacts with different domains of the 23S rRNA in the assembled 50S subunit and ribosome. Functionally, forms part of the polypeptide exit tunnel. This chain is Large ribosomal subunit protein uL4, found in Dehalococcoides mccartyi (strain ATCC BAA-2266 / KCTC 15142 / 195) (Dehalococcoides ethenogenes (strain 195)).